A 347-amino-acid chain; its full sequence is Holliday junction branch migration complex subunit RuvB (347 aa).

The large ATPase domain (RuvB-L) stretch occupies residues 1-183 (MSEERFVSGH…FGVVLQLQFY (183 aa)). Residues Leu-22, Arg-23, Gly-64, Lys-67, Thr-68, Thr-69, 130–132 (EDF), Arg-173, Tyr-183, and Arg-220 each bind ATP. Thr-68 contributes to the Mg(2+) binding site. Positions 184–254 (SEEELTRILM…VADAGLRMMG (71 aa)) are small ATPAse domain (RuvB-S). Residues 257–347 (AMGLDTVDHK…PEGPVQPRLF (91 aa)) are head domain (RuvB-H). Residues Arg-312 and Arg-317 each coordinate DNA.

The protein belongs to the RuvB family. As to quaternary structure, homohexamer. Forms an RuvA(8)-RuvB(12)-Holliday junction (HJ) complex. HJ DNA is sandwiched between 2 RuvA tetramers; dsDNA enters through RuvA and exits via RuvB. An RuvB hexamer assembles on each DNA strand where it exits the tetramer. Each RuvB hexamer is contacted by two RuvA subunits (via domain III) on 2 adjacent RuvB subunits; this complex drives branch migration. In the full resolvosome a probable DNA-RuvA(4)-RuvB(12)-RuvC(2) complex forms which resolves the HJ.

Its subcellular location is the cytoplasm. The enzyme catalyses ATP + H2O = ADP + phosphate + H(+). In terms of biological role, the RuvA-RuvB-RuvC complex processes Holliday junction (HJ) DNA during genetic recombination and DNA repair, while the RuvA-RuvB complex plays an important role in the rescue of blocked DNA replication forks via replication fork reversal (RFR). RuvA specifically binds to HJ cruciform DNA, conferring on it an open structure. The RuvB hexamer acts as an ATP-dependent pump, pulling dsDNA into and through the RuvAB complex. RuvB forms 2 homohexamers on either side of HJ DNA bound by 1 or 2 RuvA tetramers; 4 subunits per hexamer contact DNA at a time. Coordinated motions by a converter formed by DNA-disengaged RuvB subunits stimulates ATP hydrolysis and nucleotide exchange. Immobilization of the converter enables RuvB to convert the ATP-contained energy into a lever motion, pulling 2 nucleotides of DNA out of the RuvA tetramer per ATP hydrolyzed, thus driving DNA branch migration. The RuvB motors rotate together with the DNA substrate, which together with the progressing nucleotide cycle form the mechanistic basis for DNA recombination by continuous HJ branch migration. Branch migration allows RuvC to scan DNA until it finds its consensus sequence, where it cleaves and resolves cruciform DNA. In Symbiobacterium thermophilum (strain DSM 24528 / JCM 14929 / IAM 14863 / T), this protein is Holliday junction branch migration complex subunit RuvB.